A 174-amino-acid chain; its full sequence is Interferon gamma (174 aa).

Residues 1-23 (MNSTRCILALLLCLTQAMSGCYG) form the signal peptide. Q24 is subject to Pyrrolidone carboxylic acid. Residues N39 and N106 are each glycosylated (N-linked (GlcNAc...) asparagine).

This sequence belongs to the type II (or gamma) interferon family. In terms of assembly, homodimer. Interacts with IFNGR1 (via extracellular domain); this interaction promotes IFNGR1 dimerization. Released primarily from activated T lymphocytes.

Its subcellular location is the secreted. Functionally, type II interferon produced by immune cells such as T-cells and NK cells that plays crucial roles in antimicrobial, antiviral, and antitumor responses by activating effector immune cells and enhancing antigen presentation. Primarily signals through the JAK-STAT pathway after interaction with its receptor IFNGR1 to affect gene regulation. Upon IFNG binding, IFNGR1 intracellular domain opens out to allow association of downstream signaling components JAK2, JAK1 and STAT1, leading to STAT1 activation, nuclear translocation and transcription of IFNG-regulated genes. Many of the induced genes are transcription factors such as IRF1 that are able to further drive regulation of a next wave of transcription. Plays a role in class I antigen presentation pathway by inducing a replacement of catalytic proteasome subunits with immunoproteasome subunits. In turn, increases the quantity, quality, and repertoire of peptides for class I MHC loading. Increases the efficiency of peptide generation also by inducing the expression of activator PA28 that associates with the proteasome and alters its proteolytic cleavage preference. Up-regulates as well MHC II complexes on the cell surface by promoting expression of several key molecules such as cathepsins B/CTSB, H/CTSH, and L/CTSL. Participates in the regulation of hematopoietic stem cells during development and under homeostatic conditions by affecting their development, quiescence, and differentiation. In Phodopus sungorus (Striped hairy-footed hamster), this protein is Interferon gamma (IFNG).